Consider the following 513-residue polypeptide: ATP synthase subunit alpha 1 (513 aa).

169–176 contacts ATP; the sequence is GDRQTGKT.

It belongs to the ATPase alpha/beta chains family. F-type ATPases have 2 components, CF(1) - the catalytic core - and CF(0) - the membrane proton channel. CF(1) has five subunits: alpha(3), beta(3), gamma(1), delta(1), epsilon(1). CF(0) has three main subunits: a(1), b(2) and c(9-12). The alpha and beta chains form an alternating ring which encloses part of the gamma chain. CF(1) is attached to CF(0) by a central stalk formed by the gamma and epsilon chains, while a peripheral stalk is formed by the delta and b chains.

It is found in the cell inner membrane. It carries out the reaction ATP + H2O + 4 H(+)(in) = ADP + phosphate + 5 H(+)(out). Produces ATP from ADP in the presence of a proton gradient across the membrane. The alpha chain is a regulatory subunit. In Nitrosomonas eutropha (strain DSM 101675 / C91 / Nm57), this protein is ATP synthase subunit alpha 1.